Consider the following 659-residue polypeptide: Threonine--tRNA ligase (659 aa).

Positions 1–60 (MTVYLPDGKPLELPEGATAKDVARALGEGWERRAVGAIVDGELYDLLKPLPQGAKVRLLT) constitute a TGS domain. A catalytic region spans residues 252–552 (DHRRLGRELE…LIEHFAGDFP (301 aa)). Residues Cys349, His400, and His529 each contribute to the Zn(2+) site.

Belongs to the class-II aminoacyl-tRNA synthetase family. In terms of assembly, homodimer. It depends on Zn(2+) as a cofactor.

The protein localises to the cytoplasm. The catalysed reaction is tRNA(Thr) + L-threonine + ATP = L-threonyl-tRNA(Thr) + AMP + diphosphate + H(+). Its function is as follows. Catalyzes the attachment of threonine to tRNA(Thr) in a two-step reaction: L-threonine is first activated by ATP to form Thr-AMP and then transferred to the acceptor end of tRNA(Thr). Also edits incorrectly charged L-seryl-tRNA(Thr). This is Threonine--tRNA ligase from Thermus thermophilus (strain ATCC BAA-163 / DSM 7039 / HB27).